Here is a 353-residue protein sequence, read N- to C-terminus: Paraneoplastic antigen Ma1 homolog (353 aa).

The protein belongs to the PNMA family.

It is found in the nucleus. The protein localises to the nucleolus. This Bos taurus (Bovine) protein is Paraneoplastic antigen Ma1 homolog (PNMA1).